A 445-amino-acid polypeptide reads, in one-letter code: MIVIDLFSGAGGLSEGFHKHDFKIAAHVEKEYWACETIKTRLFYHFLKAQNDLELYHEYLRVSDNYRNIEQSRAFVFQRYPELREKLEMEVLNRKFGNPHNDPTATSSTQMIQLIQNSLQYSRATSVDLIIGGPPCQAYSLVGRSRMKDSVGKDSRNYLFQYYKRIVDEFKPKAFVFENVPGILTAKQGKVYQEIKESFDQIGYTVLSGTSQEDRSNVIDFADFGVPQRRKRVILFGFQKKLNYEYPNFERHKLSWNSPLTTRDVISDLPVLKPKQGHDLRLFEYDTTQGVDQLSPYELMMREDSIGFTNHFARPIKERDAEIYQIAIEHATQGRQIKYNELPERLKTHKNEKAFLDRFKVHWWDIIPHTVVAHISKDGHYNIHPDIEQCRSLTVREAARIQGFPDNYKFEGPRTAQYTQVGNAVPPLMSGIIARAVKDVINGHH.

The 444-residue stretch at 1–444 folds into the SAM-dependent MTase C5-type domain; the sequence is MIVIDLFSGA…RAVKDVINGH (444 aa). Residue C136 is part of the active site.

Belongs to the class I-like SAM-binding methyltransferase superfamily. C5-methyltransferase family.

The protein localises to the cytoplasm. It catalyses the reaction a 2'-deoxycytidine in DNA + S-adenosyl-L-methionine = a 5-methyl-2'-deoxycytidine in DNA + S-adenosyl-L-homocysteine + H(+). Component of antiviral defense system DISARM (defense island system associated with restriction-modification), composed of DrmE, DrmA, DrmB, DrmC and DrmMII. DISARM is probably a multi-gene restriction module, this subunit is a DNA methylase. Expression of DISARM in B.subtilis (strain BEST7003) confers resistance to phages Nf, phi29, phi105, phi3T, SPO1, SPR and SPP1. Protection is over 10(7)-fold against phi3T, 10(4)-10(5)-fold against Nf, phi29, phi105 and SPR, 100-fold against SPO1 and 10-fold against SPP1. DISARM does not interfere with phage adsorption, but instead interferes with (phi3T) DNA replication early in its cycle, preventing replication, circularization and lysogeny and probably causes phage DNA degradation (DNA is degraded in SPP1-infected cells). Expression of this methylase alone leads to highly methylated phage, however they are still susceptible to the DISARM system. In terms of biological role, a methylase, recognizes the double-stranded sequence 5'-CCWGG-3', methylates C-2 on both strands. Phage Nf does not have any 5'-CCWGG-3' motifs but is still targeted by the DISARM system. This Bacillus paralicheniformis (strain ATCC 9945a / NCIMB 11709 / CD-2) protein is Type II methyltransferase M.Bpa9945I.